Here is a 482-residue protein sequence, read N- to C-terminus: UDP-sulfoquinovose synthase, chloroplastic (482 aa).

The transit peptide at 1–61 directs the protein to the chloroplast; it reads MAHLLSTSCS…NNTQKLTVVR (61 aa). NAD(+) contacts are provided by residues 100–101, 120–124, 163–164, Arg189, and Asn207; these read YC, DNLVR, and DI. Arg189 is a substrate binding site. Substrate-binding residues include Thr233 and Tyr270. The active site involves Thr233. NAD(+)-binding residues include Tyr270 and Lys274. The active-site Proton acceptor is the Tyr270. The active site involves Lys274. Residue Gln297 coordinates substrate. Val300 provides a ligand contact to NAD(+). Residues 327–330, 342–344, and 415–417 each bind substrate; these read ALNR, TVY, and RVE.

This sequence belongs to the NAD(P)-dependent epimerase/dehydratase family. Homodimer. Interacts with FdGOGAT (via FMN-binding domain). Requires NAD(+) as cofactor. The N-terminus is blocked.

The protein resides in the plastid. The protein localises to the chloroplast stroma. It catalyses the reaction sulfite + UDP-alpha-D-glucose + H(+) = UDP-alpha-D-6-sulfoquinovose + H2O. Its function is as follows. Involved in the biosynthesis of sulfolipids found in thylakoid membranes. Converts UDP-glucose and sulfite to the sulfolipid head group precursor UDP-sulfoquinovose. The sulfite is delivered to the reaction center by the FMN-binding domain of FdGOGAT. The sequence is that of UDP-sulfoquinovose synthase, chloroplastic (SQD1) from Spinacia oleracea (Spinach).